Here is a 371-residue protein sequence, read N- to C-terminus: MKDITLVLLAAGDSTRFKAPFKKQWIRIGEIPLWQYVAKDLSQKCDFSDIIIVANEKEISYMKKIERNFKYAKGGKLRQNSLANALKKVKSEFVFVSDTARAEISKDLIGRLINECEKFDCVSPFLGVVDTTYLGRNQIDRNDLKLIQTPQISRANLLKKALESNEIFTDDSAAVAFAGGKLGFVEGDEKARKITFTSDLAHFDFTPASGTIFTGNGFDVHAFAKGEFITLGGVKIPCEYSLVGHSDADAAIHALMDAILGACGLGDIGELFPDTDDSFKGIDSKILLQKVVNFVHLLGFKIINADITIIAQKPKISPYKEKMCEILSEILQTSRVNVKASTTEKLGFVGRVEGVAAIASANLGYFDWRKF.

Residues 1 to 212 (MKDITLVLLA…FDFTPASGTI (212 aa)) form a 2-C-methyl-D-erythritol 4-phosphate cytidylyltransferase region. The interval 213–371 (FTGNGFDVHA…NLGYFDWRKF (159 aa)) is 2-C-methyl-D-erythritol 2,4-cyclodiphosphate synthase. A divalent metal cation contacts are provided by D219 and H221. 4-CDP-2-C-methyl-D-erythritol 2-phosphate contacts are provided by residues 219–221 (DVH) and 245–246 (HS). H253 serves as a coordination point for a divalent metal cation. 4-CDP-2-C-methyl-D-erythritol 2-phosphate contacts are provided by residues 267 to 269 (DIG), 272 to 276 (FPDTD), 341 to 344 (STTE), F348, and R351.

It in the N-terminal section; belongs to the IspD/TarI cytidylyltransferase family. IspD subfamily. This sequence in the C-terminal section; belongs to the IspF family. A divalent metal cation is required as a cofactor.

The enzyme catalyses 2-C-methyl-D-erythritol 4-phosphate + CTP + H(+) = 4-CDP-2-C-methyl-D-erythritol + diphosphate. The catalysed reaction is 4-CDP-2-C-methyl-D-erythritol 2-phosphate = 2-C-methyl-D-erythritol 2,4-cyclic diphosphate + CMP. It functions in the pathway isoprenoid biosynthesis; isopentenyl diphosphate biosynthesis via DXP pathway; isopentenyl diphosphate from 1-deoxy-D-xylulose 5-phosphate: step 2/6. It participates in isoprenoid biosynthesis; isopentenyl diphosphate biosynthesis via DXP pathway; isopentenyl diphosphate from 1-deoxy-D-xylulose 5-phosphate: step 4/6. Its function is as follows. Bifunctional enzyme that catalyzes the formation of 4-diphosphocytidyl-2-C-methyl-D-erythritol from CTP and 2-C-methyl-D-erythritol 4-phosphate (MEP) (IspD), and catalyzes the conversion of 4-diphosphocytidyl-2-C-methyl-D-erythritol 2-phosphate (CDP-ME2P) to 2-C-methyl-D-erythritol 2,4-cyclodiphosphate (ME-CPP) with a corresponding release of cytidine 5-monophosphate (CMP) (IspF). The sequence is that of Bifunctional enzyme IspD/IspF from Campylobacter hominis (strain ATCC BAA-381 / DSM 21671 / CCUG 45161 / LMG 19568 / NCTC 13146 / CH001A).